The chain runs to 583 residues: Ferredoxin--nitrite reductase, chloroplastic (583 aa).

Residues 1–22 constitute a chloroplast transit peptide; that stretch reads MSSLSVRFLSPPLFSSTPAWPR. Cys-461, Cys-467, Cys-502, and Cys-506 together coordinate [4Fe-4S] cluster. Cys-506 serves as a coordination point for siroheme.

This sequence belongs to the nitrite and sulfite reductase 4Fe-4S domain family. In terms of assembly, monomer. It depends on siroheme as a cofactor. [4Fe-4S] cluster is required as a cofactor.

It localises to the plastid. The protein localises to the chloroplast. It carries out the reaction 6 oxidized [2Fe-2S]-[ferredoxin] + NH4(+) + 2 H2O = nitrite + 6 reduced [2Fe-2S]-[ferredoxin] + 8 H(+). Its pathway is nitrogen metabolism; nitrate reduction (assimilation). This chain is Ferredoxin--nitrite reductase, chloroplastic (NIR1), found in Betula pendula (European white birch).